The sequence spans 165 residues: UPF0303 protein BamMC406_1480 (165 aa).

It belongs to the UPF0303 family.

This chain is UPF0303 protein BamMC406_1480, found in Burkholderia ambifaria (strain MC40-6).